Here is a 340-residue protein sequence, read N- to C-terminus: MEPDRTQIRLDPRYTADLLEILKTNYSVPSACFSYPPTAAQLLRALGPVDISLMVIMTLFVLGSIAIFLEAAVYLHKNTRCPIKRKTLIWCSSSPTIVSAFSCFGLWIPRALTLVEMAITTFYSMCFYLLMQAMVEGFGGKEAVLRTLKDTPVMIHTGPCCCCCPCCPRIKITRKRLQLLLLGPIQYAFFKISLTLVGLFLIPDGIFDPSDISEGSTALWINTFLGVSTLSALWTIGIIFRQARLHLGEQNIGAKFVLFQALLILSALQPSIFSVLASGGQIACSPPFSSKIRSQVMNCHLLILESFLITVLTRIYYRRKDDKLGYEPFSSPDQDLNLKA.

The Extracellular segment spans residues 1–52 (MEPDRTQIRLDPRYTADLLEILKTNYSVPSACFSYPPTAAQLLRALGPVDIS). N-linked (GlcNAc...) asparagine glycosylation occurs at Asn25. The helical transmembrane segment at 53 to 73 (LMVIMTLFVLGSIAIFLEAAV) threads the bilayer. At 74–87 (YLHKNTRCPIKRKT) the chain is on the cytoplasmic side. A helical membrane pass occupies residues 88–108 (LIWCSSSPTIVSAFSCFGLWI). The Extracellular portion of the chain corresponds to 109–110 (PR). A helical transmembrane segment spans residues 111 to 131 (ALTLVEMAITTFYSMCFYLLM). At 132 to 186 (QAMVEGFGGKEAVLRTLKDTPVMIHTGPCCCCCPCCPRIKITRKRLQLLLLGPIQ) the chain is on the cytoplasmic side. The helical transmembrane segment at 187–207 (YAFFKISLTLVGLFLIPDGIF) threads the bilayer. Topologically, residues 208–219 (DPSDISEGSTAL) are extracellular. Residues 220–240 (WINTFLGVSTLSALWTIGIIF) form a helical membrane-spanning segment. The Cytoplasmic portion of the chain corresponds to 241-255 (RQARLHLGEQNIGAK). Residues 256–276 (FVLFQALLILSALQPSIFSVL) form a helical membrane-spanning segment. Residues 277–295 (ASGGQIACSPPFSSKIRSQ) lie on the Extracellular side of the membrane. The helical transmembrane segment at 296-316 (VMNCHLLILESFLITVLTRIY) threads the bilayer. At 317–340 (YRRKDDKLGYEPFSSPDQDLNLKA) the chain is on the cytoplasmic side. Ser330 carries the phosphoserine modification.

This sequence belongs to the OST-alpha family. As to quaternary structure, interacts with SLC51B. The Ost-alpha/Ost-beta complex is a heterodimer composed of alpha (SLC51A) and beta (SLC51B) subunit.

The protein localises to the cell membrane. The protein resides in the endoplasmic reticulum membrane. The enzyme catalyses taurocholate(out) = taurocholate(in). The catalysed reaction is estrone 3-sulfate(out) = estrone 3-sulfate(in). It carries out the reaction dehydroepiandrosterone 3-sulfate(out) = dehydroepiandrosterone 3-sulfate(in). It catalyses the reaction tauroursodeoxycholate(out) = tauroursodeoxycholate(in). The enzyme catalyses glycoursodeoxycholate(out) = glycoursodeoxycholate(in). The catalysed reaction is glycocholate(out) = glycocholate(in). It carries out the reaction taurochenodeoxycholate(out) = taurochenodeoxycholate(in). It catalyses the reaction glycochenodeoxycholate(out) = glycochenodeoxycholate(in). The enzyme catalyses taurodeoxycholate(out) = taurodeoxycholate(in). The catalysed reaction is glycodeoxycholate(out) = glycodeoxycholate(in). It carries out the reaction prostaglandin E2(out) = prostaglandin E2(in). Its function is as follows. Essential component of the Ost-alpha/Ost-beta complex, a heterodimer that acts as the intestinal basolateral transporter responsible for bile acid export from enterocytes into portal blood. Efficiently transports the major species of bile acids (taurocholate). Taurine conjugates are transported more efficiently across the basolateral membrane than glycine-conjugated bile acids. Can also transport steroids such as estrone 3-sulfate and dehydroepiandrosterone 3-sulfate, therefore playing a role in the enterohepatic circulation of sterols. Able to transport eicosanoids such as prostaglandin E2. This is Organic solute transporter subunit alpha (SLC51A) from Bos taurus (Bovine).